A 513-amino-acid chain; its full sequence is Serine/threonine-protein kinase pakH (513 aa).

Positions 42–294 (FEIQEKLGEG…PSQLLDHPFI (253 aa)) constitute a Protein kinase domain. Residues 48–56 (LGEGSFGSV) and Lys71 contribute to the ATP site. The active-site Proton acceptor is Asp163. Residues 313–358 (KSKKRKSIGPSVSPKQQPNDNNNNNNNNKPQFLSKLLNNNSNSSND) form a disordered region. A compositionally biased stretch (low complexity) spans 331–357 (NDNNNNNNNNKPQFLSKLLNNNSNSSN). The helical transmembrane segment at 493-512 (IVLYSTLGLILVLSVFFKFF) threads the bilayer.

The protein belongs to the protein kinase superfamily. STE Ser/Thr protein kinase family. STE20 subfamily. Requires Mg(2+) as cofactor.

It is found in the membrane. The enzyme catalyses L-seryl-[protein] + ATP = O-phospho-L-seryl-[protein] + ADP + H(+). It carries out the reaction L-threonyl-[protein] + ATP = O-phospho-L-threonyl-[protein] + ADP + H(+). This Dictyostelium discoideum (Social amoeba) protein is Serine/threonine-protein kinase pakH (pakH-1).